The sequence spans 400 residues: Flavo-diiron protein FprA2 (400 aa).

Residues 32 to 216 form a zinc metallo-hydrolase region; the sequence is GTSYNAYLIK…VVKGLDILDA (185 aa). The Fe cation site is built by His-79, Glu-81, Asp-83, His-147, Asp-166, and His-226. Positions 257–397 constitute a Flavodoxin-like domain; it reads IPIFYCSAYG…KAFKFGEDFA (141 aa). FMN is bound by residues 263 to 267 and 345 to 372; these read SAYGN and AFGS…KVFQ.

In the N-terminal section; belongs to the zinc metallo-hydrolase group 3 family. As to quaternary structure, homotetramer. The cofactor is FMN. It depends on Fe cation as a cofactor.

It catalyses the reaction 2 NADH + O2 + 2 H(+) = 2 NAD(+) + 2 H2O. Catalyzes the four-electron reduction of molecular oxygen to water. In fact, functions as the terminal component of an NADH oxidase (NADH:O(2) oxidoreductase) when using NADH:rubredoxin oxidoreductase (NROR) and rubredoxin (Rd) as electron transport intermediaries between NADH and FDP. Is thus able to reductively scavenge intracellular dioxygen and is part of an oxidative stress defense system in C.acetobutylicum, an obligate anaerobic bacterium. Can also serve as the terminal component of an NADH:nitric oxide oxidoreductase (NOR) with a catalytic efficiency comparable to that of its NADH oxidase activity, and therefore might have an in vivo role in scavenging nitric oxide. The polypeptide is Flavo-diiron protein FprA2 (fprA2) (Clostridium acetobutylicum (strain ATCC 824 / DSM 792 / JCM 1419 / IAM 19013 / LMG 5710 / NBRC 13948 / NRRL B-527 / VKM B-1787 / 2291 / W)).